The sequence spans 135 residues: Flagellar assembly factor FliW 2 (135 aa).

The protein belongs to the FliW family. In terms of assembly, interacts with translational regulator CsrA and flagellin(s).

The protein localises to the cytoplasm. Acts as an anti-CsrA protein, binds CsrA and prevents it from repressing translation of its target genes, one of which is flagellin. Binds to flagellin and participates in the assembly of the flagellum. In Helicobacter acinonychis (strain Sheeba), this protein is Flagellar assembly factor FliW 2.